A 664-amino-acid polypeptide reads, in one-letter code: Protein-arginine deiminase type-3 (664 aa).

This sequence belongs to the protein arginine deiminase family. The cofactor is Ca(2+). As to expression, epidermis and hair follicles.

Its subcellular location is the cytoplasm. It carries out the reaction L-arginyl-[protein] + H2O = L-citrullyl-[protein] + NH4(+). Its function is as follows. Catalyzes the deimination of arginine residues of proteins. The protein is Protein-arginine deiminase type-3 (Padi3) of Rattus norvegicus (Rat).